The following is a 44-amino-acid chain: Antimicrobial peptide 2 (44 aa).

Post-translationally, disulfide bonds. As to expression, expressed in flowers but not in leaves, seeds or roots (at protein level).

Its function is as follows. Antimicrobial peptide. Active against fungal species B.cinerea (IC(50)=5.2 uM), A.niger (IC(50)=2.6 uM) and B.sorokinina (IC(50)=5.2 uM) but not against F.oxysporum, F.graminearum and P.debaryanum at concentrations below 10 uM. Inhibits growth of P.infestans at concentration between 1.3 uM and 5.2 uM. Active against bacterial species P.syringae, B.subtilis, X.campestris and C.michiganense. The sequence is that of Antimicrobial peptide 2 from Taraxacum officinale (Common dandelion).